Reading from the N-terminus, the 451-residue chain is Interferon-related developmental regulator 1 (451 aa).

Over residues 1–10 the composition is skewed to basic residues; that stretch reads MPKNKKRNTP. A disordered region spans residues 1 to 69; it reads MPKNKKRNTP…PSSFAEDGPE (69 aa). Residues 23-33 are compositionally biased toward low complexity; sequence AAAATAATAGG. Residues 49 to 61 are compositionally biased toward polar residues; that stretch reads ETMSHCSGYSDPS.

It belongs to the IFRD family. Interacts with PSIP1/LEDGF. As to expression, expressed in a variety of tissues.

Its function is as follows. Could play a role in regulating gene activity in the proliferative and/or differentiative pathways induced by NGF. May be an autocrine factor that attenuates or amplifies the initial ligand-induced signal. In Homo sapiens (Human), this protein is Interferon-related developmental regulator 1 (IFRD1).